We begin with the raw amino-acid sequence, 114 residues long: Phycoerythrin alpha-1 subunit (114 aa).

(2R,3E)-phycoerythrobilin-binding residues include Asp-52, Ser-53, Glu-63, Arg-64, Cys-67, Thr-72, Lys-74, Ala-75, and Lys-84.

Belongs to the phycoerythrin family. As to quaternary structure, heterotetramer of 2 different alpha chains and 2 identical beta chains which form 2 alpha-beta heterodimers within the heterotetramer. The two alpha-beta heterodimers are rotated to an open configuration in contrast to the closed configuration found in other cryptophyte species due to the insertion of a single amino acid, Asp-65, in a conserved region of the alpha chain. In the open form, the central chromophores are not in physical contact but are separated by a water-filled channel. Contains three phycoerythrobilin chromophores with binding mediated by both the alpha and beta subunits.

It is found in the plastid. The protein resides in the chloroplast thylakoid membrane. In terms of biological role, light-harvesting photosynthetic tetrapyrrole chromophore-protein from the phycobiliprotein complex. In Hemiselmis andersenii (Cryptophyte alga), this protein is Phycoerythrin alpha-1 subunit.